A 264-amino-acid chain; its full sequence is Thiazole synthase (264 aa).

Lysine 106 (schiff-base intermediate with DXP) is an active-site residue. 1-deoxy-D-xylulose 5-phosphate-binding positions include glycine 167, 193 to 194, and 215 to 216; these read AG and NT.

It belongs to the ThiG family. As to quaternary structure, homotetramer. Forms heterodimers with either ThiH or ThiS.

It is found in the cytoplasm. The enzyme catalyses [ThiS sulfur-carrier protein]-C-terminal-Gly-aminoethanethioate + 2-iminoacetate + 1-deoxy-D-xylulose 5-phosphate = [ThiS sulfur-carrier protein]-C-terminal Gly-Gly + 2-[(2R,5Z)-2-carboxy-4-methylthiazol-5(2H)-ylidene]ethyl phosphate + 2 H2O + H(+). Its pathway is cofactor biosynthesis; thiamine diphosphate biosynthesis. In terms of biological role, catalyzes the rearrangement of 1-deoxy-D-xylulose 5-phosphate (DXP) to produce the thiazole phosphate moiety of thiamine. Sulfur is provided by the thiocarboxylate moiety of the carrier protein ThiS. In vitro, sulfur can be provided by H(2)S. In Xylella fastidiosa (strain Temecula1 / ATCC 700964), this protein is Thiazole synthase.